The chain runs to 367 residues: 4-hydroxy-3-methylbut-2-en-1-yl diphosphate synthase (flavodoxin) (367 aa).

Residues cysteine 270, cysteine 273, cysteine 305, and glutamate 312 each coordinate [4Fe-4S] cluster.

It belongs to the IspG family. The cofactor is [4Fe-4S] cluster.

It carries out the reaction (2E)-4-hydroxy-3-methylbut-2-enyl diphosphate + oxidized [flavodoxin] + H2O + 2 H(+) = 2-C-methyl-D-erythritol 2,4-cyclic diphosphate + reduced [flavodoxin]. The protein operates within isoprenoid biosynthesis; isopentenyl diphosphate biosynthesis via DXP pathway; isopentenyl diphosphate from 1-deoxy-D-xylulose 5-phosphate: step 5/6. Its function is as follows. Converts 2C-methyl-D-erythritol 2,4-cyclodiphosphate (ME-2,4cPP) into 1-hydroxy-2-methyl-2-(E)-butenyl 4-diphosphate. This is 4-hydroxy-3-methylbut-2-en-1-yl diphosphate synthase (flavodoxin) from Buchnera aphidicola subsp. Schizaphis graminum (strain Sg).